The following is a 251-amino-acid chain: Adenylate kinase (251 aa).

ATP is bound at residue 46-51 (GAGKGT). Residues 66 to 95 (ATGDMLRSQVQQQTPLGVEAKKIMDAGGLV) form an NMP region. AMP contacts are provided by residues threonine 67, arginine 72, 93 to 95 (GLV), 122 to 125 (GFPR), and glutamine 129. The LID stretch occupies residues 163 to 200 (GRLVHPASGRSYHKVFNPPKKEMIDDITGEALVQRSDD). ATP-binding positions include arginine 164 and 173-174 (SY). The AMP site is built by arginine 197 and arginine 208. ATP is bound at residue glutamine 236.

It belongs to the adenylate kinase family. AK2 subfamily. As to quaternary structure, monomer.

The protein resides in the cytoplasm. Its subcellular location is the cytosol. It is found in the mitochondrion intermembrane space. It catalyses the reaction AMP + ATP = 2 ADP. Functionally, catalyzes the reversible transfer of the terminal phosphate group between ATP and AMP. Plays an important role in cellular energy homeostasis and in adenine nucleotide metabolism. Adenylate kinase activity is critical for regulation of the phosphate utilization and the AMP de novo biosynthesis pathways. This is Adenylate kinase from Yarrowia lipolytica (strain CLIB 122 / E 150) (Yeast).